Here is a 351-residue protein sequence, read N- to C-terminus: D-alanine--D-alanine ligase (351 aa).

The 195-residue stretch at 146–340 (KEIMLYNNIK…YEDLCESIVL (195 aa)) folds into the ATP-grasp domain. Position 173 to 226 (173 to 226 (AFDYPMVVKPNSGGSSIGTRIVHDEAELAESLKDAYRFDDEIIVEEFITGREFS)) interacts with ATP. Residues aspartate 295, glutamate 307, and asparagine 309 each coordinate Mg(2+).

The protein belongs to the D-alanine--D-alanine ligase family. The cofactor is Mg(2+). Requires Mn(2+) as cofactor.

It is found in the cytoplasm. It catalyses the reaction 2 D-alanine + ATP = D-alanyl-D-alanine + ADP + phosphate + H(+). It functions in the pathway cell wall biogenesis; peptidoglycan biosynthesis. Functionally, cell wall formation. This chain is D-alanine--D-alanine ligase, found in Pediococcus pentosaceus (strain ATCC 25745 / CCUG 21536 / LMG 10740 / 183-1w).